Reading from the N-terminus, the 88-residue chain is UPF0297 protein str1959 (88 aa).

It belongs to the UPF0297 family.

The polypeptide is UPF0297 protein str1959 (Streptococcus thermophilus (strain CNRZ 1066)).